The following is a 389-amino-acid chain: POU domain, class 5, transcription factor 3 (389 aa).

2 stretches are compositionally biased toward low complexity: residues 1–18 (MFSPDGGLPAAPFGLLPD) and 145–165 (LANLGSSGSSSGAASEGGHSS). 2 disordered regions span residues 1–88 (MFSP…APPA) and 145–177 (LANLGSSGSSSGAASEGGHSSDSGDEDAPTSEE). Acidic residues predominate over residues 167-177 (SGDEDAPTSEE). The 75-residue stretch at 170 to 244 (EDAPTSEELE…LLQRWLNEAE (75 aa)) folds into the POU-specific domain. The segment at residues 264-323 (KRKRRTSIETNVKGTLESFFRKCVKPSPQEISQIAEDLNLDKDVVRVWFCNRRQKGKRLL) is a DNA-binding region (homeobox).

It belongs to the POU transcription factor family.

The protein localises to the nucleus. Required for the maintenance of pluripotency and self-renewal of embryonic stem cells. Transcriptional activator that binds the DNA consensus sequence 5'-ATGCAAAT-3'. This is POU domain, class 5, transcription factor 3 (POU5F3) from Gallus gallus (Chicken).